A 687-amino-acid chain; its full sequence is Glycine--tRNA ligase beta subunit (687 aa).

The protein belongs to the class-II aminoacyl-tRNA synthetase family. As to quaternary structure, tetramer of two alpha and two beta subunits.

It is found in the cytoplasm. It catalyses the reaction tRNA(Gly) + glycine + ATP = glycyl-tRNA(Gly) + AMP + diphosphate. In Neisseria gonorrhoeae (strain ATCC 700825 / FA 1090), this protein is Glycine--tRNA ligase beta subunit.